Here is a 725-residue protein sequence, read N- to C-terminus: Catalase-peroxidase (725 aa).

The segment at residues 88–211 (WHSAGTYRIQ…LAASEMGLIY (124 aa)) is a cross-link (tryptophyl-tyrosyl-methioninium (Trp-Tyr) (with M-237)). The Proton acceptor role is filled by H89. A cross-link (tryptophyl-tyrosyl-methioninium (Tyr-Met) (with W-88)) is located at residues 211 to 237 (YVNPEGPGREPDPLKAAQQIRETFKRM). Position 252 (H252) interacts with heme b.

It belongs to the peroxidase family. Peroxidase/catalase subfamily. Homodimer or homotetramer. The cofactor is heme b. In terms of processing, formation of the three residue Trp-Tyr-Met cross-link is important for the catalase, but not the peroxidase activity of the enzyme.

It catalyses the reaction H2O2 + AH2 = A + 2 H2O. The enzyme catalyses 2 H2O2 = O2 + 2 H2O. Functionally, bifunctional enzyme with both catalase and broad-spectrum peroxidase activity. This chain is Catalase-peroxidase, found in Symbiobacterium thermophilum (strain DSM 24528 / JCM 14929 / IAM 14863 / T).